The chain runs to 452 residues: Phosphatidylinositol N-acetylglucosaminyltransferase GPI3 subunit (452 aa).

Residues 407 to 427 (LYLLCGIVEYMLFFLLEWLYP) form a helical membrane-spanning segment.

Belongs to the glycosyltransferase group 1 family. In terms of assembly, component of the phosphatidylinositol N-acetylglucosaminyltransferase complex composed of at least GPI1, GPI2, GPI3, GPI15, GPI19 and ERI1.

It localises to the endoplasmic reticulum membrane. It catalyses the reaction a 1,2-diacyl-sn-glycero-3-phospho-(1D-myo-inositol) + UDP-N-acetyl-alpha-D-glucosamine = a 6-(N-acetyl-alpha-D-glucosaminyl)-1-(1,2-diacyl-sn-glycero-3-phospho)-1D-myo-inositol + UDP + H(+). It functions in the pathway glycolipid biosynthesis; glycosylphosphatidylinositol-anchor biosynthesis. With respect to regulation, inhibited by Ras, probably via the interaction between RAS2 and ERI1. Catalytic subunit in the complex catalyzing the transfer of N-acetylglucosamine from UDP-N-acetylglucosamine to phosphatidylinositol, the first step of GPI biosynthesis. The chain is Phosphatidylinositol N-acetylglucosaminyltransferase GPI3 subunit (SPT14) from Saccharomyces cerevisiae (strain YJM789) (Baker's yeast).